A 183-amino-acid chain; its full sequence is Ribosome rescue factor SmrB (183 aa).

The region spanning 98-173 (LDLHGLTQLQ…GDAALLVLIE (76 aa)) is the Smr domain.

Belongs to the SmrB family. In terms of assembly, associates with collided ribosomes, but not with correctly translating polysomes.

In terms of biological role, acts as a ribosome collision sensor. Detects stalled/collided disomes (pairs of ribosomes where the leading ribosome is stalled and a second ribosome has collided with it) and endonucleolytically cleaves mRNA at the 5' boundary of the stalled ribosome. Stalled/collided disomes form a new interface (primarily via the 30S subunits) that binds SmrB. Cleaved mRNA becomes available for tmRNA ligation, leading to ribosomal subunit dissociation and rescue of stalled ribosomes. The sequence is that of Ribosome rescue factor SmrB from Escherichia coli (strain 55989 / EAEC).